A 365-amino-acid polypeptide reads, in one-letter code: D-alanine--D-alanine ligase (365 aa).

Positions 135–345 (KLLLKSFNIP…YGSLVDKLIA (211 aa)) constitute an ATP-grasp domain. ATP is bound at residue 168–223 (KQSLDYPVIVKPAMLGSSIGISIAYNETQIEKCIEEAFAYDLTVVIEKFMRAREIE). Mg(2+) is bound by residues Asp-298, Glu-312, and Asn-314.

This sequence belongs to the D-alanine--D-alanine ligase family. Requires Mg(2+) as cofactor. Mn(2+) serves as cofactor.

The protein localises to the cytoplasm. The enzyme catalyses 2 D-alanine + ATP = D-alanyl-D-alanine + ADP + phosphate + H(+). It participates in cell wall biogenesis; peptidoglycan biosynthesis. Functionally, cell wall formation. This is D-alanine--D-alanine ligase from Borrelia turicatae (strain 91E135).